The following is a 252-amino-acid chain: Uracil-DNA glycosylase (252 aa).

Asp-87 functions as the Proton acceptor in the catalytic mechanism.

This sequence belongs to the uracil-DNA glycosylase (UDG) superfamily. UNG family.

The protein resides in the host nucleus. It carries out the reaction Hydrolyzes single-stranded DNA or mismatched double-stranded DNA and polynucleotides, releasing free uracil.. Its function is as follows. Excises uracil residues from the DNA which can arise as a result of misincorporation of dUMP residues by DNA polymerase or deamination of cytosines. Therefore may reduce deleterious uracil incorporation into the viral genome, particularly in terminally differentiated cells which lack DNA repair enzymes. This is Uracil-DNA glycosylase (46) from Saimiri sciureus (Common squirrel monkey).